Reading from the N-terminus, the 181-residue chain is Nedd8-conjugating enzyme UbcE2M (181 aa).

Interaction with Uba3 stretches follow at residues 4–7 (LFTL) and 24–54 (ASAA…PNDL). The UBC core domain occupies 26–170 (AAQLRIQKDI…VKKAMRGGCV (145 aa)). Cysteine 108 serves as the catalytic Glycyl thioester intermediate.

The protein belongs to the ubiquitin-conjugating enzyme family. UBC12 subfamily. In terms of assembly, interacts with Uba3. In terms of tissue distribution, expressed in the wing disk.

It catalyses the reaction [E1 NEDD8-activating enzyme]-S-[NEDD8 protein]-yl-L-cysteine + [E2 NEDD8-conjugating enzyme]-L-cysteine = [E1 NEDD8-activating enzyme]-L-cysteine + [E2 NEDD8-conjugating enzyme]-S-[NEDD8-protein]-yl-L-cysteine.. The protein operates within protein modification; protein neddylation. In terms of biological role, accepts the ubiquitin-like protein Nedd8 from the Uba3-APP-BP1 E1 complex and catalyzes its covalent attachment to other proteins. Required for Cul1 and Cul3 neddylation. Negatively regulates full-length ci stability and hedgehog signaling. This is Nedd8-conjugating enzyme UbcE2M from Drosophila melanogaster (Fruit fly).